Consider the following 270-residue polypeptide: Acyl-[acyl-carrier-protein]--UDP-N-acetylglucosamine O-acyltransferase (270 aa).

It belongs to the transferase hexapeptide repeat family. LpxA subfamily. In terms of assembly, homotrimer.

The protein localises to the cytoplasm. The enzyme catalyses a (3R)-hydroxyacyl-[ACP] + UDP-N-acetyl-alpha-D-glucosamine = a UDP-3-O-[(3R)-3-hydroxyacyl]-N-acetyl-alpha-D-glucosamine + holo-[ACP]. The protein operates within glycolipid biosynthesis; lipid IV(A) biosynthesis; lipid IV(A) from (3R)-3-hydroxytetradecanoyl-[acyl-carrier-protein] and UDP-N-acetyl-alpha-D-glucosamine: step 1/6. Its function is as follows. Involved in the biosynthesis of lipid A, a phosphorylated glycolipid that anchors the lipopolysaccharide to the outer membrane of the cell. The sequence is that of Acyl-[acyl-carrier-protein]--UDP-N-acetylglucosamine O-acyltransferase from Helicobacter pylori (strain Shi470).